We begin with the raw amino-acid sequence, 301 residues long: Nucleotide-binding protein Mb1456 (301 aa).

Residue 24–31 (GLSGAGRG) coordinates ATP. 75-78 (DVRS) provides a ligand contact to GTP.

Belongs to the RapZ-like family.

Functionally, displays ATPase and GTPase activities. This chain is Nucleotide-binding protein Mb1456, found in Mycobacterium bovis (strain ATCC BAA-935 / AF2122/97).